Consider the following 129-residue polypeptide: Small ribosomal subunit protein uS11 (129 aa).

It belongs to the universal ribosomal protein uS11 family. As to quaternary structure, part of the 30S ribosomal subunit. Interacts with proteins S7 and S18. Binds to IF-3.

Its function is as follows. Located on the platform of the 30S subunit, it bridges several disparate RNA helices of the 16S rRNA. Forms part of the Shine-Dalgarno cleft in the 70S ribosome. The polypeptide is Small ribosomal subunit protein uS11 (Lactobacillus delbrueckii subsp. bulgaricus (strain ATCC 11842 / DSM 20081 / BCRC 10696 / JCM 1002 / NBRC 13953 / NCIMB 11778 / NCTC 12712 / WDCM 00102 / Lb 14)).